The sequence spans 202 residues: Imidazoleglycerol-phosphate dehydratase (202 aa).

It belongs to the imidazoleglycerol-phosphate dehydratase family.

The protein localises to the cytoplasm. It catalyses the reaction D-erythro-1-(imidazol-4-yl)glycerol 3-phosphate = 3-(imidazol-4-yl)-2-oxopropyl phosphate + H2O. It participates in amino-acid biosynthesis; L-histidine biosynthesis; L-histidine from 5-phospho-alpha-D-ribose 1-diphosphate: step 6/9. In Chelativorans sp. (strain BNC1), this protein is Imidazoleglycerol-phosphate dehydratase.